Consider the following 551-residue polypeptide: Terpene synthase 10 (551 aa).

Mg(2+)-binding residues include D303, D307, and E455. The short motif at 303 to 307 (DDIYD) is the DDXXD motif element.

Belongs to the terpene synthase family. It depends on Mg(2+) as a cofactor.

Functionally, catalyzes the cyclization of farnesyl diphosphate to sesquiterpene olefins. This Ricinus communis (Castor bean) protein is Terpene synthase 10 (TPS10).